The primary structure comprises 2967 residues: BEACH domain-containing protein lvsD (2967 aa).

Disordered regions lie at residues 1-25, 322-364, 588-615, 917-936, 1077-1105, 1173-1220, 1583-1613, 1831-1859, 1921-2009, and 2029-2062; these read MSSP…RIGG, NNNN…SSNS, ILSI…QQQL, NNSN…NNIN, GGSN…KDKD, NTSS…SDHR, NNNS…NNEN, QQQQ…SSVV, PQKT…TLNN, and KSTL…NNKN. The region spanning 229–491 is the BEACH 1 domain; it reads MTFRKAPSSV…QDLFRKGSNY (263 aa). The span at 1079-1092 shows a compositional bias: low complexity; it reads SNNNNNNNNNNSNN. Residues 1093–1105 show a composition bias toward basic and acidic residues; that stretch reads NKDKIDSNNKDKD. 6 stretches are compositionally biased toward low complexity: residues 1185 to 1194, 1583 to 1611, 1831 to 1857, 1926 to 1980, 1993 to 2006, and 2034 to 2062; these read PLLTSTKSMS, NNNS…LNNN, QQQQ…SSSS, QNQH…SFSN, NIIT…TTST, and SSSS…NNKN. The BEACH-type PH domain maps to 2060–2162; it reads NKNIKLEFST…ICAQILKLIG (103 aa). BEACH domains are found at residues 2202–2492 and 2628–2785; these read TPQQ…HPQR and NSRV…IYSN. WD repeat units lie at residues 2658 to 2710 and 2720 to 2761; these read NHKS…SDHH and GHNF…KSIQ. Disordered stretches follow at residues 2798-2820 and 2915-2934; these read SATT…SSNT and PSTS…NNGN. Low complexity-rich tracts occupy residues 2811-2820 and 2924-2934; these read SSSSLSSSNT and NSNNNNNNNGN.

The chain is BEACH domain-containing protein lvsD (lvsD) from Dictyostelium discoideum (Social amoeba).